The chain runs to 287 residues: Nucleoside kinase (287 aa).

Residues D13, N28, G38, and N42 each contribute to the substrate site. Residue Q102 participates in ATP binding. Substrate is bound by residues S104 and Q150. Residues N173 and 196 to 201 each bind ATP; that span reads TNGERG. D227 contacts substrate. The active-site Proton acceptor is D227.

The protein belongs to the carbohydrate kinase PfkB family. In terms of assembly, homodimer. Mg(2+) is required as a cofactor. Requires Co(2+) as cofactor.

The enzyme catalyses adenosine + ATP = AMP + ADP + H(+). It catalyses the reaction cytidine + ATP = CMP + ADP + H(+). The catalysed reaction is guanosine + ATP = GMP + ADP + H(+). It carries out the reaction inosine + ATP = IMP + ADP + H(+). Functionally, nucleoside kinase with broad substrate specificity. Catalyzes the phosphorylation of a variety of nucleosides to the corresponding nucleoside 5'-mono-phosphate in the presence of phosphate donors and divalent cations. Displays the most efficient activity with guanosine, followed by inosine, cytidine, and adenosine. Negligible enzymatic activity is detected with thymidine, uridine, and 2-deoxyadenosine. ATP is the most efficient phosphate donor, but can also use GTP and ITP. Shows no sugar kinase activity, since it is unable to phosphorylate ribose, fructose-1-phosphate, or fructose-6-phosphate. This is Nucleoside kinase from Thermoplasma acidophilum (strain ATCC 25905 / DSM 1728 / JCM 9062 / NBRC 15155 / AMRC-C165).